Reading from the N-terminus, the 424-residue chain is Histidine--tRNA ligase (424 aa).

It belongs to the class-II aminoacyl-tRNA synthetase family. As to quaternary structure, homodimer.

It is found in the cytoplasm. The catalysed reaction is tRNA(His) + L-histidine + ATP = L-histidyl-tRNA(His) + AMP + diphosphate + H(+). This Escherichia coli (strain 55989 / EAEC) protein is Histidine--tRNA ligase.